The chain runs to 283 residues: Bifunctional protein FolD (283 aa).

166–168 (GAS) contributes to the NADP(+) binding site.

The protein belongs to the tetrahydrofolate dehydrogenase/cyclohydrolase family. Homodimer.

It catalyses the reaction (6R)-5,10-methylene-5,6,7,8-tetrahydrofolate + NADP(+) = (6R)-5,10-methenyltetrahydrofolate + NADPH. It carries out the reaction (6R)-5,10-methenyltetrahydrofolate + H2O = (6R)-10-formyltetrahydrofolate + H(+). It participates in one-carbon metabolism; tetrahydrofolate interconversion. Functionally, catalyzes the oxidation of 5,10-methylenetetrahydrofolate to 5,10-methenyltetrahydrofolate and then the hydrolysis of 5,10-methenyltetrahydrofolate to 10-formyltetrahydrofolate. The chain is Bifunctional protein FolD from Coxiella burnetii (strain Dugway 5J108-111).